We begin with the raw amino-acid sequence, 699 residues long: UV radiation resistance-associated gene protein (699 aa).

Residues 1 to 10 (MSASASVGGP) are compositionally biased toward low complexity. The disordered stretch occupies residues 1 to 24 (MSASASVGGPVPQPPPGPAAALPP). Residues 23–149 (PPGSAARALH…YLGQQIHARN (127 aa)) enclose the C2 domain. A sufficient for interaction with STX7; VTI1B AND STX8 region spans residues 200–269 (HRAQCAIKQT…REVALLHKQQ (70 aa)). Positions 224–305 (LRLTSTSNEL…LRKECTAKRE (82 aa)) form a coiled coil. The sufficient for interaction with VPS16, required for interaction with CEP63 stretch occupies residues 270 to 442 (IALQDKGSAF…IAQLRYQHGL (173 aa)). The required for interaction with PRKDC, XRCC6 and XRCC5 stretch occupies residues 443 to 699 (GTPDLRQTLP…FRRPRRSSDK (257 aa)). The interval 486-591 (GGADVGFSGG…SQEQGEALSG (106 aa)) is disordered. Serine 493 is modified (phosphoserine). Serine 498 is modified (phosphoserine; by MTOR). Position 508 is a phosphoserine (serine 508). Position 518 is a phosphothreonine (threonine 518). Serine 522 carries the phosphoserine modification. The segment covering 523–535 (YNSALAQPVTTVP) has biased composition (polar residues). The segment covering 545 to 556 (TSLSSSLDTSLD) has biased composition (low complexity). A phosphoserine mark is found at serine 549 and serine 550. The span at 557–567 (FSKENKKKGED) shows a compositional bias: basic and acidic residues. 3 positions are modified to phosphoserine: serine 571, serine 582, and serine 689.

In terms of assembly, component of the PI3K (PI3KC3/PI3K-III/class III phosphatidylinositol 3-kinase) complex II (PI3KC3-C2) in which the core composed of the catalytic subunit PIK3C3, the regulatory subunit PIK3R4 and BECN1 is associated with UVRAG; in the complex interacts directly with BECN1. PI3KC3-C2 can associate with further regulatory subunits such as RUBCN and probably SH3GLB1/Bif-1. Interacts with SH3GLB1; UVRAG bridges the interaction to BECN1 indicative for an association with the PI3K complex PI3KC3-C2. Interacts with RINT1. Associates with the NRZ complex under basal conditions and dissociates from it under autophagy conditions to associate with the PI3K complex; these complex associations seem to be mutually exclusive. Interacts with VPS16; VPS11; VPS18; VPS33 (VPS33A or VPS33B) and VPS39; indicative for an association with a class C Vps tethering complex (possibly the HOPS complex). Interacts with RAB7A; RAB7A competes with UVRAG for RUBCN binding. Interacts with STX7, VTI1B, STX8. Interacts with PRKDC, XRCC6 and XRCC5; indicative for an association with the DNA-dependent protein kinase complex DNA-PK. Interacts with CEP63. Directly interacts with FEZ1 and SCOC; the interaction with SCOC is reduced by amino acid starvation, but the complex is stabilized in the presence of FEZ1. Interacts with BECN1P1/BECN2. Interacts with SLAMF1. Interacts with RUBCNL/PACER; promoting targeting of UVRAG to autophagosome. Interacts with WNK1. In terms of processing, phosphorylated at Ser-498 by MTOR under basal conditions; increases the interaction with RUBCN implicated in inhibitory effect of RUBCN on PI3KC3 and decreases interaction with RAB7,A and VPS16 and VPS39 (indicative for a class C Vps complex, possibly the HOPS complex). In terms of tissue distribution, highly expressed in brain, lung, kidney and liver.

The protein resides in the late endosome. Its subcellular location is the lysosome. The protein localises to the cytoplasmic vesicle. It is found in the autophagosome. It localises to the early endosome. The protein resides in the endoplasmic reticulum. Its subcellular location is the midbody. The protein localises to the chromosome. It is found in the centromere. Functionally, versatile protein that is involved in regulation of different cellular pathways implicated in membrane trafficking. Involved in regulation of the COPI-dependent retrograde transport from Golgi and the endoplasmic reticulum by associating with the NRZ complex; the function is dependent on its binding to phosphatidylinositol 3-phosphate (PtdIns(3)P). During autophagy acts as a regulatory subunit of the alternative PI3K complex II (PI3KC3-C2) that mediates formation of phosphatidylinositol 3-phosphate and is believed to be involved in maturation of autophagosomes and endocytosis. Activates lipid kinase activity of PIK3C3. Involved in the regulation of degradative endocytic trafficking and cytokinesis, and in regulation of ATG9A transport from the Golgi to the autophagosome; the functions seems to implicate its association with PI3KC3-C2. Involved in maturation of autophagosomes and degradative endocytic trafficking independently of BECN1 but depending on its association with a class C Vps complex (possibly the HOPS complex); the association is also proposed to promote autophagosome recruitment and activation of Rab7 and endosome-endosome fusion events. Enhances class C Vps complex (possibly HOPS complex) association with a SNARE complex and promotes fusogenic SNARE complex formation during late endocytic membrane fusion. In case of negative-strand RNA virus infection is required for efficient virus entry, promotes endocytic transport of virions and is implicated in a VAMP8-specific fusogenic SNARE complex assembly. Involved in maintaining chromosomal stability. Promotes DNA double-strand break (DSB) repair by association with DNA-dependent protein kinase complex DNA-PK and activating it in non-homologous end joining (NHEJ). Required for centrosome stability and proper chromosome segregation. The protein is UV radiation resistance-associated gene protein (UVRAG) of Homo sapiens (Human).